The primary structure comprises 882 residues: MPKIKSFAPAWLNEPAPGHKLFAPAADDGTATVPLAYGKKIKPGPRRTIARRGTEIFVACGKQIRWGDLAQLKESWESRPSRSSVGPTSTKKDSSDFDDGAATAGYRIIKTPVADDIRQLVMSPNQDFLAVLTSHTVHICILPDSSHLHIQDTTPFKPKFWTLGPTTHVTSRSAVVSAVWHPLGVNGHALVTVTEDAIVRVWELSTADRWTFDAPTLAIDLKKLADATYLDQDFGVSTSATNKGFSPDAFDMEVAAACFPTRDSGGWAPMTLWLAMTSGDVYALCPLLPQRWTPPPTLIPSLSASIVAKVAAAEDNPESTPEERLVAQQQLEWMSEIDNQEPKLVEEATGEATIEVYTRPSRPGLVPKLQGPFDFDLNPEDEQDDEVELKDIYVIGEKPRVADLMRGEEEELEMMKEDQHNGLSLNIICLLSTSGQVKICLDIDGVEAQWLPPRSKNKRLFAPPPEPPSLLTFQTFDTLKPAEVTPDGWPMFSEDATSPYSFYVTHPAGITYISLTPWVFRLESELQSDSEAGTEFRIDLLAKGQGSERDRIFTQTRTQSPLAAATSIDDPDLGYFILSATQTDPIALFFETPERPVVPKETSVVIPEHVEERPPSPYWEPRPLFHPAEALDKPSAVPAWIDNLRTGRRRPLLTQELRLSMATLEVFHDGHKVVSTEVSDINDAVAELFRKCEALQGELRDQIKKVNEVKNRIHTITGDDLSDDPPVSEDQLIKQRIRVARERQEELANRMERLRKKFGRTTTRELSDKEKAWIEEVQNMATSILGPEAGQGALATTPNLAKQPWKRLEEIKTLRNALMAEAEQLQKVGDDTEESTPASQMPSLKIPSEIRKAKMAQVMSLLERESALVDAVKARIERLSIG.

Residues Trp76–Asp98 form a disordered region. Coiled coils occupy residues Thr676 to Thr762 and Lys806 to Gly829.

In terms of assembly, component of the nuclear pore complex (NPC). NPC constitutes the exclusive means of nucleocytoplasmic transport. NPCs allow the passive diffusion of ions and small molecules and the active, nuclear transport receptor-mediated bidirectional transport of macromolecules such as proteins, RNAs, ribonucleoparticles (RNPs), and ribosomal subunits across the nuclear envelope. Due to its 8-fold rotational symmetry, all subunits are present with 8 copies or multiples thereof.

It is found in the nucleus. Its subcellular location is the nuclear pore complex. It localises to the nucleus membrane. Functions as a component of the nuclear pore complex (NPC). NPC components, collectively referred to as nucleoporins (NUPs), can play the role of both NPC structural components and of docking or interaction partners for transiently associated nuclear transport factors. This chain is Nucleoporin NUP82 (NUP82), found in Chaetomium thermophilum (strain DSM 1495 / CBS 144.50 / IMI 039719) (Thermochaetoides thermophila).